Consider the following 242-residue polypeptide: Ubiquinone biosynthesis O-methyltransferase (242 aa).

Residues Arg44, Gly64, Asp85, and Met129 each coordinate S-adenosyl-L-methionine.

It belongs to the methyltransferase superfamily. UbiG/COQ3 family.

It catalyses the reaction a 3-demethylubiquinol + S-adenosyl-L-methionine = a ubiquinol + S-adenosyl-L-homocysteine + H(+). The catalysed reaction is a 3-(all-trans-polyprenyl)benzene-1,2-diol + S-adenosyl-L-methionine = a 2-methoxy-6-(all-trans-polyprenyl)phenol + S-adenosyl-L-homocysteine + H(+). It participates in cofactor biosynthesis; ubiquinone biosynthesis. Its function is as follows. O-methyltransferase that catalyzes the 2 O-methylation steps in the ubiquinone biosynthetic pathway. In Salmonella choleraesuis (strain SC-B67), this protein is Ubiquinone biosynthesis O-methyltransferase.